A 433-amino-acid polypeptide reads, in one-letter code: Glutamate-1-semialdehyde 2,1-aminomutase (433 aa).

An N6-(pyridoxal phosphate)lysine modification is found at K273.

Belongs to the class-III pyridoxal-phosphate-dependent aminotransferase family. HemL subfamily. As to quaternary structure, homodimer. The cofactor is pyridoxal 5'-phosphate.

It is found in the cytoplasm. It carries out the reaction (S)-4-amino-5-oxopentanoate = 5-aminolevulinate. The protein operates within porphyrin-containing compound metabolism; protoporphyrin-IX biosynthesis; 5-aminolevulinate from L-glutamyl-tRNA(Glu): step 2/2. Its pathway is porphyrin-containing compound metabolism; chlorophyll biosynthesis. This is Glutamate-1-semialdehyde 2,1-aminomutase from Gloeothece citriformis (strain PCC 7424) (Cyanothece sp. (strain PCC 7424)).